The sequence spans 350 residues: Biotin synthase (350 aa).

One can recognise a Radical SAM core domain in the interval 41–268 (NEVQISRLLS…KSRVRLSAGR (228 aa)). [4Fe-4S] cluster-binding residues include Cys-56, Cys-60, and Cys-63. 4 residues coordinate [2Fe-2S] cluster: Cys-100, Cys-131, Cys-191, and Arg-263.

This sequence belongs to the radical SAM superfamily. Biotin synthase family. As to quaternary structure, homodimer. Requires [4Fe-4S] cluster as cofactor. [2Fe-2S] cluster serves as cofactor.

It catalyses the reaction (4R,5S)-dethiobiotin + (sulfur carrier)-SH + 2 reduced [2Fe-2S]-[ferredoxin] + 2 S-adenosyl-L-methionine = (sulfur carrier)-H + biotin + 2 5'-deoxyadenosine + 2 L-methionine + 2 oxidized [2Fe-2S]-[ferredoxin]. It participates in cofactor biosynthesis; biotin biosynthesis; biotin from 7,8-diaminononanoate: step 2/2. In terms of biological role, catalyzes the conversion of dethiobiotin (DTB) to biotin by the insertion of a sulfur atom into dethiobiotin via a radical-based mechanism. The chain is Biotin synthase from Shewanella piezotolerans (strain WP3 / JCM 13877).